The sequence spans 432 residues: Tyrosine--tRNA ligase (432 aa).

Tyrosine 35 contributes to the L-tyrosine binding site. The 'HIGH' region motif lies at 40–49; it reads PTAGSLHVGH. L-tyrosine-binding residues include tyrosine 175 and glutamine 179. Positions 239-243 match the 'KMSKS' region motif; it reads KFGKT. Lysine 242 lines the ATP pocket. Positions 365-422 constitute an S4 RNA-binding domain; sequence PPLVDLFASTGLVPSKSAARRTIQEGGAYLNNAKVTDIEARVSEADLLHGRYLVLRRG.

The protein belongs to the class-I aminoacyl-tRNA synthetase family. TyrS type 1 subfamily. As to quaternary structure, homodimer.

It is found in the cytoplasm. The catalysed reaction is tRNA(Tyr) + L-tyrosine + ATP = L-tyrosyl-tRNA(Tyr) + AMP + diphosphate + H(+). Its function is as follows. Catalyzes the attachment of tyrosine to tRNA(Tyr) in a two-step reaction: tyrosine is first activated by ATP to form Tyr-AMP and then transferred to the acceptor end of tRNA(Tyr). This chain is Tyrosine--tRNA ligase, found in Thermobifida fusca (strain YX).